The following is a 348-amino-acid chain: MQSITIRRPDDWHLHLRDGAILEGVIADTSRTFARAIIMPNLVPPVVTTADAKAYRERILKALPDGHRFQPLMTLYLTEQTSPDDVEAGAASGLITAVKLYPAGATTNSHGGVRDMEKAMPVLERMAKIGLPLCVHGEVTTPDVDIFDREAVFIDTVLDPLRRRLPELKVTMEHVTTAGGIDYIKAAQGNLAGSITTHHLIINRNAILVGGIRPHYYCLPVAKRENHRLALRAAAVSGDPRFFLGTDSAPHVDPLKECACGCAGIYTSINTMSCLAHVFEEEGALDRLEAFASLNGPAWYGLSPNEERITLSKQADPVVFPAKIETGAGAVTVFDPMVPLHWQVSASA.

H13 and H15 together coordinate Zn(2+). Residues 15–17 (HLR) and N41 each bind substrate. Residues K99, H136, and H174 each contribute to the Zn(2+) site. N6-carboxylysine is present on K99. H136 serves as a coordination point for substrate. L219 is a substrate binding site. Position 247 (D247) interacts with Zn(2+). The active site involves D247. Substrate is bound by residues H251 and A263.

Belongs to the metallo-dependent hydrolases superfamily. DHOase family. Class II DHOase subfamily. As to quaternary structure, homodimer. The cofactor is Zn(2+).

It carries out the reaction (S)-dihydroorotate + H2O = N-carbamoyl-L-aspartate + H(+). Its pathway is pyrimidine metabolism; UMP biosynthesis via de novo pathway; (S)-dihydroorotate from bicarbonate: step 3/3. Functionally, catalyzes the reversible cyclization of carbamoyl aspartate to dihydroorotate. In Rhizobium etli (strain ATCC 51251 / DSM 11541 / JCM 21823 / NBRC 15573 / CFN 42), this protein is Dihydroorotase.